A 180-amino-acid polypeptide reads, in one-letter code: dCTP deaminase (180 aa).

Residues 101 to 106 (KSSFAR) and Asp-117 contribute to the dCTP site. Catalysis depends on Glu-127, which acts as the Proton donor/acceptor. The dCTP site is built by Tyr-159 and Gln-168.

This sequence belongs to the dCTP deaminase family. As to quaternary structure, homotrimer.

The enzyme catalyses dCTP + H2O + H(+) = dUTP + NH4(+). The protein operates within pyrimidine metabolism; dUMP biosynthesis; dUMP from dCTP (dUTP route): step 1/2. In terms of biological role, catalyzes the deamination of dCTP to dUTP. The polypeptide is dCTP deaminase (Ignicoccus hospitalis (strain KIN4/I / DSM 18386 / JCM 14125)).